Reading from the N-terminus, the 110-residue chain is MGRGVSAGGGQSSLGYLFGSGEAPKLAAVNKTPAETESSAHAPPTQAAAANAVDSIKQVPAGLNSNSANNYMRAEGQNTGNFITDRPSTKVHSAPGGGSSLDYLFGGGSN.

A disordered region spans residues 28 to 110 (AVNKTPAETE…LDYLFGGGSN (83 aa)). A compositionally biased stretch (low complexity) spans 40 to 52 (AHAPPTQAAAANA). A compositionally biased stretch (polar residues) spans 63–82 (LNSNSANNYMRAEGQNTGNF). Serine 67 carries the phosphoserine modification. Gly residues predominate over residues 95–110 (PGGGSSLDYLFGGGSN).

Belongs to the SPIRAL1 family. As to expression, ubiquitous.

Functionally, acts redundantly with SPR1 in maintaining the cortical microtubules organization essential for anisotropic cell growth. The chain is Protein SPIRAL1-like 2 (SP1L2) from Arabidopsis thaliana (Mouse-ear cress).